The chain runs to 208 residues: MRDPIDVYNNALVPMVVEQSSRGERAFDIYSRLLRERIIFLTGPVEDYGASLIVAQLLFLEAENPKKEISFYINSPGGVVTSGLSIYDTMQFIRCPVTTLCVGQAASMGSLLLTAGEPGHRFALPNARIMVHQPSGGFQGQATDILIHAREIEALKRRLNEIYVKHTGRDYDTIHTALERDNFMTADAAKEFGLIDEVIEKRPEPAAA.

S107 (nucleophile) is an active-site residue. H132 is a catalytic residue.

This sequence belongs to the peptidase S14 family. As to quaternary structure, fourteen ClpP subunits assemble into 2 heptameric rings which stack back to back to give a disk-like structure with a central cavity, resembling the structure of eukaryotic proteasomes.

It is found in the cytoplasm. It catalyses the reaction Hydrolysis of proteins to small peptides in the presence of ATP and magnesium. alpha-casein is the usual test substrate. In the absence of ATP, only oligopeptides shorter than five residues are hydrolyzed (such as succinyl-Leu-Tyr-|-NHMec, and Leu-Tyr-Leu-|-Tyr-Trp, in which cleavage of the -Tyr-|-Leu- and -Tyr-|-Trp bonds also occurs).. Functionally, cleaves peptides in various proteins in a process that requires ATP hydrolysis. Has a chymotrypsin-like activity. Plays a major role in the degradation of misfolded proteins. The sequence is that of ATP-dependent Clp protease proteolytic subunit from Methylobacterium radiotolerans (strain ATCC 27329 / DSM 1819 / JCM 2831 / NBRC 15690 / NCIMB 10815 / 0-1).